The following is a 100-amino-acid chain: Urease subunit gamma 2 (100 aa).

This sequence belongs to the urease gamma subunit family. In terms of assembly, heterotrimer of UreA (gamma), UreB (beta) and UreC (alpha) subunits. Three heterotrimers associate to form the active enzyme.

Its subcellular location is the cytoplasm. The catalysed reaction is urea + 2 H2O + H(+) = hydrogencarbonate + 2 NH4(+). Its pathway is nitrogen metabolism; urea degradation; CO(2) and NH(3) from urea (urease route): step 1/1. Its function is as follows. Disrupting the ure2 operon has no effect on urease activity or pathogen survival in BALB/c mice when administered orally. The protein is Urease subunit gamma 2 of Brucella abortus (strain 2308).